Reading from the N-terminus, the 172-residue chain is Large ribosomal subunit protein uL10 (172 aa).

The protein belongs to the universal ribosomal protein uL10 family. As to quaternary structure, part of the ribosomal stalk of the 50S ribosomal subunit. The N-terminus interacts with L11 and the large rRNA to form the base of the stalk. The C-terminus forms an elongated spine to which L12 dimers bind in a sequential fashion forming a multimeric L10(L12)X complex.

In terms of biological role, forms part of the ribosomal stalk, playing a central role in the interaction of the ribosome with GTP-bound translation factors. The sequence is that of Large ribosomal subunit protein uL10 from Brucella suis biovar 1 (strain 1330).